Here is a 284-residue protein sequence, read N- to C-terminus: Efem/EfeO family lipoprotein (284 aa).

Residues 1-17 (MKKLTTLLLASTLLIAA) form the signal peptide. C18 carries the N-palmitoyl cysteine lipid modification. Residue C18 is the site of S-diacylglycerol cysteine attachment.

It belongs to the EfeM/EfeO family.

The protein resides in the cell membrane. The chain is Efem/EfeO family lipoprotein from Staphylococcus aureus (strain NCTC 8325 / PS 47).